Reading from the N-terminus, the 2194-residue chain is Nucleosome-remodeling factor subunit NURF301-like (2194 aa).

A compositionally biased stretch (basic residues) spans 1–12 (MAPPRGRSKRKH). Residues 1 to 137 (MAPPRGRSKR…EEEESSDDEF (137 aa)) are disordered. Over residues 60 to 79 (AQRETPSDAEEVEVKIEEIS) the composition is skewed to basic and acidic residues. Over residues 80 to 93 (VRSTPASTPAPKST) the composition is skewed to polar residues. A compositionally biased stretch (basic residues) spans 94-112 (SKARGRPKKNPTPPRRKSL). Acidic residues predominate over residues 118 to 137 (DIIYMDEDSEEEEESSDDEF). 2 DDT domains span residues 196 to 256 (TASI…SDDE) and 341 to 396 (VGKF…SAVR). A PHD-type 1 zinc finger spans residues 347–392 (DENCRVCGKSSGRVVGCTQCEAAFHVECSHLKPFPEVLVCNICKKN). Disordered stretches follow at residues 1091–1122 (ESWL…SLDN), 1158–1255 (AKRK…PQPN), 1413–1433 (TSNF…PVYS), 1657–1701 (MRQE…SNDS), and 1834–1888 (ESIA…HTPG). Residues 1151–1187 (RAEAEKTAKRKLEATRKAQKAKEDEERRRIQQQQQRS) adopt a coiled-coil conformation. Basic and acidic residues predominate over residues 1158–1179 (AKRKLEATRKAQKAKEDEERRR). Residues 1665-1684 (TSGYDSSGNPIRSITSSGDT) show a composition bias toward polar residues. The span at 1852–1861 (KSEDDRDKPE) shows a compositional bias: basic and acidic residues. DDT domains lie at 1883 to 1953 (AFHT…EQER) and 1948 to 2014 (IEEQ…AEGY). 2 consecutive PHD-type zinc fingers follow at residues 1899–1950 (IEHC…CIEE) and 1959–2010 (ALYC…CTRE). The 105-residue stretch at 2030–2134 (QLTRADYTHV…EVFDKKLIDV (105 aa)) folds into the Bromo domain.

The protein belongs to the BPTF family. As to quaternary structure, part of a nucleosome remodeling factor-like (NURF-like) complex containing nurf-1 and isw-1.

Its subcellular location is the nucleus. Functionally, histone-binding component of a NURF-like (nucleosome remodeling factor-like) complex, which would catalyze ATP-dependent nucleosome sliding and facilitate transcription of chromatin. Involved in vulval cell fates. This is Nucleosome-remodeling factor subunit NURF301-like (nurf-1) from Caenorhabditis elegans.